The primary structure comprises 147 residues: MFNMNINSPVRFVKETNRAKSPTRQSPYAAGYDLYSAYDYTIPPGERQLIKTDISMSMPKFCYGRIAPRSGLSLKGIDIGGGVIDEDYRGNIGVILINNGKCTFNVNTGDRIAQLIYQRIYYPELEEVQSLDSTDRGDQGFGSTGLR.

Residue R24 coordinates Mg(2+). DUTP-binding positions include 68 to 70 (PRS), 82 to 85 (GVID), Y88, G93, I95, and R111.

This sequence belongs to the dUTPase family. The cofactor is Mg(2+).

The catalysed reaction is dUTP + H2O = dUMP + diphosphate + H(+). Functionally, this enzyme is involved in nucleotide metabolism: it produces dUMP, the immediate precursor of thymidine nucleotides and it decreases the intracellular concentration of dUTP so that uracil cannot be incorporated into DNA. The chain is Deoxyuridine 5'-triphosphate nucleotidohydrolase (OPG046) from Oryctolagus cuniculus (Rabbit).